Here is a 147-residue protein sequence, read N- to C-terminus: Small ribosomal subunit protein eS19 (147 aa).

This sequence belongs to the eukaryotic ribosomal protein eS19 family. Component of the small ribosomal subunit.

The protein localises to the cytoplasm. The protein resides in the nucleus. Functionally, component of the small ribosomal subunit. The ribosome is a large ribonucleoprotein complex responsible for the synthesis of proteins in the cell. Required for pre-rRNA processing and maturation of 40S ribosomal subunits. In Ictalurus punctatus (Channel catfish), this protein is Small ribosomal subunit protein eS19 (rps19).